The chain runs to 36 residues: MISAYLPSFFVPLVCLVFPAIAMAFLFVQIEKEEIV.

A helical membrane pass occupies residues 8–28 (SFFVPLVCLVFPAIAMAFLFV).

This sequence belongs to the PsaI family.

The protein resides in the plastid. It is found in the chloroplast thylakoid membrane. In terms of biological role, may help in the organization of the PsaL subunit. In Chara vulgaris (Common stonewort), this protein is Photosystem I reaction center subunit VIII.